We begin with the raw amino-acid sequence, 178 residues long: Negative modulator of initiation of replication (178 aa).

Residues Arg-113–Tyr-117 are interaction with DNA.

Belongs to the SeqA family. Homodimer. Polymerizes to form helical filaments.

The protein localises to the cytoplasm. Negative regulator of replication initiation, which contributes to regulation of DNA replication and ensures that replication initiation occurs exactly once per chromosome per cell cycle. Binds to pairs of hemimethylated GATC sequences in the oriC region, thus preventing assembly of replication proteins and re-initiation at newly replicated origins. Repression is relieved when the region becomes fully methylated. The sequence is that of Negative modulator of initiation of replication from Photobacterium profundum (strain SS9).